Here is a 362-residue protein sequence, read N- to C-terminus: MWASCCNWFCLDGQPEETPPPQGARTQAYSNPGYSSFPSPTGSEPSCKACGVHFASTTRKQTCLDCKKNFCMTCSSQEGNGPRLCLLCLRFRATAFQREELMKMKVKDLRDYLSLHDISTEMCREKEELVFLVLGQQPVISEADRTRAPTLPQAFPEQQAFLTQPQSSTVPPTSPGLPSSPAQVTSVLAQDQETQQAIGHVSQDHEEPIFLESTARVPPEDETQSVDSEDSFVPGRRASLSDLTHLEDIEGLTVRQLKEILARNFVNYKGCCEKWELMERVTRLYKDQKGLQHLVSGNEDQNGGAVPSGLEENLCKICMDSPIDCVLLECGHMVTCTKCGKRMNECPICRQYVIRAVHVFRS.

Positions 17 to 37 are disordered; it reads ETPPPQGARTQAYSNPGYSSF. The span at 24–37 shows a compositional bias: polar residues; the sequence is ARTQAYSNPGYSSF. The FYVE-type zinc finger occupies 41–93; that stretch reads TGSEPSCKACGVHFASTTRKQTCLDCKKNFCMTCSSQEGNGPRLCLLCLRFRA. The SAP 1 domain occupies 101-120; the sequence is LMKMKVKDLRDYLSLHDIST. The segment at 162-183 is disordered; the sequence is LTQPQSSTVPPTSPGLPSSPAQ. 4 positions are modified to phosphoserine: S225, S228, S231, and S239. The region spanning 249 to 263 is the SAP 2 domain; sequence IEGLTVRQLKEILAR. An RING-type zinc finger spans residues 315-350; the sequence is CKICMDSPIDCVLLECGHMVTCTKCGKRMNECPICR.

As to quaternary structure, interacts with CASP8 and CASP10. Interacts with RIPK1 (via protein kinase domain); involved in RIPK1 ubiquitination. Interacts with PRR5L. Interacts (via RING-type zinc finger) with p53/TP53; involved in p53/TP53 ubiquitination. Interacts (via RING-type zinc finger) with MDM2; the interaction stabilizes MDM2. Autoubiquitinated. Post-translationally, palmitoylated. In terms of processing, undergoes caspase-mediated cleavage upon death-receptor activation, by TNFSF10 for instance. May be mediated by the caspases CASP8 and CASP10 in a negative feedback loop. In terms of tissue distribution, ubiquitous. Detected in cerebrum, cerebellum, midbrain, brain stem, hippocampus, striatum, liver, heart, lung, kidney, muscle, spleen and testis.

The protein resides in the cytoplasm. It is found in the cytosol. The protein localises to the cell membrane. Its subcellular location is the recycling endosome membrane. The catalysed reaction is S-ubiquitinyl-[E2 ubiquitin-conjugating enzyme]-L-cysteine + [acceptor protein]-L-lysine = [E2 ubiquitin-conjugating enzyme]-L-cysteine + N(6)-ubiquitinyl-[acceptor protein]-L-lysine.. Its pathway is protein modification; protein ubiquitination. In terms of biological role, E3 ubiquitin-protein ligase that regulates several biological processes through the ubiquitin-mediated proteasomal degradation of various target proteins. Mediates 'Lys-48'-linked polyubiquitination of PRR5L and its subsequent proteasomal degradation thereby indirectly regulating cell migration through the mTORC2 complex. Also ubiquitinates the caspases CASP8 and CASP10, promoting their proteasomal degradation, to negatively regulate apoptosis downstream of death domain receptors. Also negatively regulates the tumor necrosis factor-mediated signaling pathway through targeting of RIPK1 to ubiquitin-mediated proteasomal degradation. Negatively regulates p53/TP53 through its direct ubiquitination and targeting to proteasomal degradation. Indirectly, may also negatively regulate p53/TP53 through ubiquitination and degradation of SFN. May also play a role in endocytic recycling. The sequence is that of E3 ubiquitin-protein ligase rififylin from Rattus norvegicus (Rat).